The chain runs to 543 residues: Protein lin-14 (543 aa).

Disordered stretches follow at residues 165-228 and 268-291; these read PNGH…SSNH and APAT…PRKP. A compositionally biased stretch (polar residues) spans 177 to 213; the sequence is SMQTDEQQVKWSSPSSVDSNGQKTDSSAASAGDNQNI. Residues 268–282 show a composition bias toward low complexity; sequence APATNGTTNGATKAA.

In terms of processing, cleaved by caspase ced-3 in vitro.

The protein localises to the nucleus. Functionally, heterochronic protein which controls the choice of stage specific cell fates. Involved in the temporal progression of vulval fate patterning, possibly by inhibiting lin-12. Acts as a transcription factor involved in the stage-specific repression of insulin/insulin-like growth factor gene ins-33. The sequence is that of Protein lin-14 (lin-14) from Caenorhabditis briggsae.